The sequence spans 291 residues: Probable protein S-acyltransferase 12 (291 aa).

The next 2 helical transmembrane spans lie at Gly14–Val34 and Leu49–Trp69. The 51-residue stretch at Gly111–Phe161 folds into the DHHC domain. Cys141 (S-palmitoyl cysteine intermediate) is an active-site residue. The next 2 helical transmembrane spans lie at Phe155 to Leu175 and Leu198 to Met218.

This sequence belongs to the DHHC palmitoyltransferase family.

It is found in the cell membrane. It carries out the reaction L-cysteinyl-[protein] + hexadecanoyl-CoA = S-hexadecanoyl-L-cysteinyl-[protein] + CoA. Functionally, palmitoyl acyltransferase. In Arabidopsis thaliana (Mouse-ear cress), this protein is Probable protein S-acyltransferase 12 (PAT12).